Here is a 34-residue protein sequence, read N- to C-terminus: TPFRYCNPRNCAKECQGRGKETTYCDEVCKCSGW.

Intrachain disulfides connect Cys6–Cys25, Cys11–Cys29, and Cys15–Cys31.

The protein belongs to the short scorpion toxin superfamily. Potassium channel inhibitor family. Alpha-KTx 21 subfamily. In terms of tissue distribution, expressed by the venom gland.

The protein localises to the secreted. Its function is as follows. Toxin that blocks voltage-gated potassium channels (Kv). The protein is Potassium channel toxin of Tityus metuendus (Scorpion).